We begin with the raw amino-acid sequence, 438 residues long: Putative metabolite transport protein HI_0281 (438 aa).

The Cytoplasmic segment spans residues Met1–Met17. The helical transmembrane segment at Val18–Phe38 threads the bilayer. The Periplasmic segment spans residues Asn39–Asp52. A helical transmembrane segment spans residues Leu53 to Phe73. Residues Gly74 to Thr85 lie on the Cytoplasmic side of the membrane. Residues Leu86–Tyr106 traverse the membrane as a helical segment. The Periplasmic portion of the chain corresponds to Ala107–Ile115. A helical transmembrane segment spans residues Leu116–Ala136. Topologically, residues Leu137–Gln156 are cytoplasmic. The helical transmembrane segment at Leu157–Leu177 threads the bilayer. The Periplasmic segment spans residues Gly178–Ala181. Residues Leu182–Leu202 traverse the membrane as a helical segment. The Cytoplasmic portion of the chain corresponds to Tyr203 to Met239. Residues Val240–Ala260 form a helical membrane-spanning segment. At Gln261–Phe286 the chain is on the periplasmic side. A helical transmembrane segment spans residues Thr287–Tyr307. At Ala308–Arg314 the chain is on the cytoplasmic side. The helical transmembrane segment at Lys315–Glu336 threads the bilayer. Topologically, residues Asn337 to Ser342 are periplasmic. Residues Val343–Ala363 form a helical membrane-spanning segment. The Cytoplasmic segment spans residues Leu364–Gly377. A helical transmembrane segment spans residues Ala378 to Leu398. Residues Lys399–Gly405 lie on the Periplasmic side of the membrane. Residues Val406–Ala426 form a helical membrane-spanning segment. Topologically, residues Ser427 to Ile438 are cytoplasmic.

This sequence belongs to the major facilitator superfamily. Sugar transporter (TC 2.A.1.1) family.

The protein localises to the cell inner membrane. The sequence is that of Putative metabolite transport protein HI_0281 from Haemophilus influenzae (strain ATCC 51907 / DSM 11121 / KW20 / Rd).